Consider the following 1355-residue polypeptide: DNA-directed RNA polymerase subunit beta' (1355 aa).

Positions 219, 293, 300, and 303 each coordinate Zn(2+). The segment at Ala1331 to Asp1355 is disordered.

This sequence belongs to the RNA polymerase beta' chain family. RpoC2 subfamily. In cyanobacteria the RNAP catalytic core is composed of 2 alpha, 1 beta, 1 beta', 1 gamma and 1 omega subunit. When a sigma factor is associated with the core the holoenzyme is formed, which can initiate transcription. The cofactor is Zn(2+).

It catalyses the reaction RNA(n) + a ribonucleoside 5'-triphosphate = RNA(n+1) + diphosphate. Functionally, DNA-dependent RNA polymerase catalyzes the transcription of DNA into RNA using the four ribonucleoside triphosphates as substrates. The protein is DNA-directed RNA polymerase subunit beta' of Trichormus variabilis (strain ATCC 29413 / PCC 7937) (Anabaena variabilis).